The primary structure comprises 937 residues: CAP-Gly domain-containing linker protein 1 homolog (937 aa).

Positions 39–81 constitute a CAP-Gly domain; that stretch reads GPIHGKDGMFCGIELLEPNGKHDGTFQGVSYFIATPYHGIFAP. Disordered stretches follow at residues 90 to 131 and 264 to 548; these read EELP…VMST and LPND…SRLQ. A compositionally biased stretch (polar residues) spans 268–281; the sequence is LNANFSNKNSTTTF. Basic and acidic residues predominate over residues 285 to 295; that stretch reads ETPKVEIRENG. Polar residues predominate over residues 296-309; the sequence is NLDNSIETPPQQSP. Composition is skewed to basic and acidic residues over residues 317-353, 383-396, 409-424, and 463-473; these read HESDSSSKKDDTKSDKSPTKKSQKMEEKPVVKKKEEP, IEAEKTKPKKEIKS, PQKENKEGGEMTETPR, and AKERVEKEKKI. The segment covering 492–501 has biased composition (low complexity); that stretch reads SSIPSTSSAS. 2 coiled-coil regions span residues 566 to 740 and 773 to 800; these read EDNE…VDEI and QQIEDLRRKQIHDEEEKEAMKRSFDLMQ. 2 disordered regions span residues 819–866 and 916–937; these read MESR…DSMN and PTIKSESSRIGNTSDSGIGLVM. A compositionally biased stretch (low complexity) spans 832–844; sequence RSRSSASGSRPIS. Residues 845–858 show a composition bias toward polar residues; that stretch reads MATSNGGDQRLSTS.

The protein is CAP-Gly domain-containing linker protein 1 homolog of Caenorhabditis elegans.